The primary structure comprises 168 residues: Signal peptidase complex catalytic subunit SEC11 (168 aa).

Topologically, residues 1–12 (MNLRLELTRFLN) are cytoplasmic. A helical; Signal-anchor for type II membrane protein membrane pass occupies residues 13–30 (LCFALASAFMFWKGLSIV). At 31–168 (TNSHSPIVVV…IALSALLSNE (138 aa)) the chain is on the lumenal side. Residues Ser44, His83, and Asp110 each act as charge relay system in the active site. Residues 154–165 (GLMGLIALSALL) form a C-terminal short (CTS) helix region.

Belongs to the peptidase S26B family. As to quaternary structure, component of the signal peptidase complex (SPC) composed of a catalytic subunit SEC11 and three accessory subunits SPC1, SPC2 and SPC3. The complex induces a local thinning of the ER membrane which is used to measure the length of the signal peptide (SP) h-region of protein substrates. This ensures the selectivity of the complex towards h-regions shorter than 18-20 amino acids. SPC associates with the translocon complex.

Its subcellular location is the endoplasmic reticulum membrane. The enzyme catalyses Cleavage of hydrophobic, N-terminal signal or leader sequences from secreted and periplasmic proteins.. Its function is as follows. Catalytic component of the signal peptidase complex (SPC) which catalyzes the cleavage of N-terminal signal sequences from nascent proteins as they are translocated into the lumen of the endoplasmic reticulum. Specifically cleaves N-terminal signal peptides that contain a hydrophobic alpha-helix (h-region) shorter than 18-20 amino acids. In Lachancea thermotolerans (strain ATCC 56472 / CBS 6340 / NRRL Y-8284) (Yeast), this protein is Signal peptidase complex catalytic subunit SEC11 (SEC11).